The sequence spans 787 residues: Alpha-glucosidase 2 (787 aa).

Residues Asp407 and Glu410 contribute to the active site. Residue Asp484 is the Proton donor of the active site.

Belongs to the glycosyl hydrolase 31 family. In terms of assembly, homohexamer.

It catalyses the reaction Hydrolysis of terminal, non-reducing (1-&gt;4)-linked alpha-D-glucose residues with release of alpha-D-glucose.. The polypeptide is Alpha-glucosidase 2 (Bacillus thermoamyloliquefaciens).